The primary structure comprises 376 residues: Carbamoyl phosphate synthase small chain (376 aa).

Positions 1–187 are CPSase; it reads MKALLVLEDG…AEDGSYAWRG (187 aa). Residues Ser45, Gly239, and Gly241 each contribute to the L-glutamine site. One can recognise a Glutamine amidotransferase type-1 domain in the interval 191–376; it reads PLLVYDFGIK…RKIIGESAGA (186 aa). Catalysis depends on Cys266, which acts as the Nucleophile. L-glutamine-binding residues include Leu267, Gln270, Asn308, Gly310, and Phe311. Catalysis depends on residues His349 and Glu351.

It belongs to the CarA family. In terms of assembly, composed of two chains; the small (or glutamine) chain promotes the hydrolysis of glutamine to ammonia, which is used by the large (or ammonia) chain to synthesize carbamoyl phosphate. Tetramer of heterodimers (alpha,beta)4.

It carries out the reaction hydrogencarbonate + L-glutamine + 2 ATP + H2O = carbamoyl phosphate + L-glutamate + 2 ADP + phosphate + 2 H(+). It catalyses the reaction L-glutamine + H2O = L-glutamate + NH4(+). It participates in amino-acid biosynthesis; L-arginine biosynthesis; carbamoyl phosphate from bicarbonate: step 1/1. Its pathway is pyrimidine metabolism; UMP biosynthesis via de novo pathway; (S)-dihydroorotate from bicarbonate: step 1/3. In terms of biological role, small subunit of the glutamine-dependent carbamoyl phosphate synthetase (CPSase). CPSase catalyzes the formation of carbamoyl phosphate from the ammonia moiety of glutamine, carbonate, and phosphate donated by ATP, constituting the first step of 2 biosynthetic pathways, one leading to arginine and/or urea and the other to pyrimidine nucleotides. The small subunit (glutamine amidotransferase) binds and cleaves glutamine to supply the large subunit with the substrate ammonia. This is Carbamoyl phosphate synthase small chain from Desulfovibrio desulfuricans (strain ATCC 27774 / DSM 6949 / MB).